The sequence spans 376 residues: Partitioning defective 6 homolog gamma (376 aa).

Positions 18 to 98 (AVEVKSKFGA…PLLRVFIQKR (81 aa)) constitute a PB1 domain. The tract at residues 127–254 (RRRAHLDIGL…VTVKPANQRN (128 aa)) is interaction with PARD3 and CDC42. The 18-residue stretch at 134-151 (IGLPRDFRPVSSIIDVDL) folds into the Pseudo-CRIB domain. The PDZ domain occupies 158–251 (RVRLHRHGCE…NLIVTVKPAN (94 aa)). Positions 356 to 376 (PRHSLALPPGGVEEHGPAVTL) are disordered. Residues 367–376 (VEEHGPAVTL) show a composition bias toward basic and acidic residues.

It belongs to the PAR6 family. As to quaternary structure, interacts with PARD3. Interacts with GTP-bound forms of CDC42, RHOQ/TC10 and RAC1. Interacts with the N-terminal part of PRKCI and PRKCZ. Widely expressed, with a higher expression in fetal and adult kidney.

It localises to the cytoplasm. The protein resides in the cell membrane. Its subcellular location is the cell junction. The protein localises to the tight junction. Adapter protein involved in asymmetrical cell division and cell polarization processes. May play a role in the formation of epithelial tight junctions. The PARD6-PARD3 complex links GTP-bound Rho small GTPases to atypical protein kinase C proteins. The sequence is that of Partitioning defective 6 homolog gamma (PARD6G) from Homo sapiens (Human).